The chain runs to 416 residues: Diaminobutyrate--2-oxoglutarate transaminase (416 aa).

K263 is subject to N6-(pyridoxal phosphate)lysine.

Belongs to the class-III pyridoxal-phosphate-dependent aminotransferase family. Requires pyridoxal 5'-phosphate as cofactor.

The catalysed reaction is L-2,4-diaminobutanoate + 2-oxoglutarate = L-aspartate 4-semialdehyde + L-glutamate. Its pathway is amine and polyamine biosynthesis; ectoine biosynthesis; L-ectoine from L-aspartate 4-semialdehyde: step 1/3. Functionally, catalyzes reversively the conversion of L-aspartate beta-semialdehyde (ASA) to L-2,4-diaminobutyrate (DABA) by transamination with L-glutamate. The sequence is that of Diaminobutyrate--2-oxoglutarate transaminase (ectB) from Virgibacillus pantothenticus.